We begin with the raw amino-acid sequence, 223 residues long: Peroxynitrite isomerase 1 (223 aa).

The short motif at 69–75 (GVWRGEG) is the GXWXGXG element. Lys186 and His213 together coordinate heme b.

The protein belongs to the nitrobindin family. Homodimer. It depends on heme b as a cofactor.

It carries out the reaction peroxynitrite = nitrate. The protein operates within nitrogen metabolism. Its function is as follows. Heme-binding protein able to scavenge peroxynitrite and to protect free L-tyrosine against peroxynitrite-mediated nitration, by acting as a peroxynitrite isomerase that converts peroxynitrite to nitrate. Therefore, this protein likely plays a role in peroxynitrite sensing and in the detoxification of reactive nitrogen and oxygen species (RNS and ROS, respectively). Is able to bind nitric oxide (NO) in vitro, but may act as a sensor of peroxynitrite levels in vivo. The polypeptide is Peroxynitrite isomerase 1 (Mycobacterium marinum (strain ATCC BAA-535 / M)).